Here is a 274-residue protein sequence, read N- to C-terminus: Hydroxyacylglutathione hydrolase, cytoplasmic isozyme (274 aa).

6 residues coordinate Zn(2+): histidine 59, histidine 61, aspartate 63, histidine 64, histidine 121, and aspartate 144. Residues arginine 153 and 188 to 190 (HEY) each bind substrate. Position 188 (histidine 188) interacts with Zn(2+). Serine 257 bears the Phosphoserine mark. 268-271 (RAMK) contributes to the substrate binding site.

The protein belongs to the metallo-beta-lactamase superfamily. Glyoxalase II family. Zn(2+) serves as cofactor.

Its subcellular location is the cytoplasm. The catalysed reaction is an S-(2-hydroxyacyl)glutathione + H2O = a 2-hydroxy carboxylate + glutathione + H(+). It carries out the reaction (R)-S-lactoylglutathione + H2O = (R)-lactate + glutathione + H(+). It functions in the pathway secondary metabolite metabolism; methylglyoxal degradation; (R)-lactate from methylglyoxal: step 2/2. With respect to regulation, inhibited by various thiol compounds such as glutathione and coenzyme A. In terms of biological role, thiolesterase that catalyzes the hydrolysis of S-D-lactoylglutathione to form glutathione and D-lactic acid. Involved in the metabolism of methylglyoxal, a toxic compound for yeast proliferation, by converting methylglyoxal to lactate via S-D-lactoylglutathione by sequential enzyme reactions catalyzed by glyoxalase I and glyoxalase II. The protein is Hydroxyacylglutathione hydrolase, cytoplasmic isozyme of Saccharomyces cerevisiae (strain ATCC 204508 / S288c) (Baker's yeast).